Reading from the N-terminus, the 798-residue chain is Probable G-protein coupled receptor 156 (798 aa).

Topologically, residues 1–49 (MEPEINCSEFCDSFPGQELDRRPLHDLCKTTITESQHSSTAASPLSPAL) are extracellular. The N-linked (GlcNAc...) asparagine glycan is linked to Asn6. Residues 50-70 (LGIMWTFLSCGLLLVLFFLAF) form a helical membrane-spanning segment. Topologically, residues 71–86 (TIRCRKNRIVKMSSPN) are cytoplasmic. Residues 87-107 (LNVVTLLGSCLTYISAYLFGI) traverse the membrane as a helical segment. At 108-118 (QDALEGSSVEA) the chain is on the extracellular side. A helical transmembrane segment spans residues 119–139 (LIQTRLSLLCIGTSLVFGPIL). The Cytoplasmic portion of the chain corresponds to 140–164 (GKSWRLYKVFTQRVPDKRVIIKDLQ). Residues 165-185 (LLGLVAALVVADVILLVTWVL) form a helical membrane-spanning segment. The Extracellular segment spans residues 186–222 (TDPIQCLQMLGVSMKVTGRDVSCSLTNTHFCASRYSD). A helical transmembrane segment spans residues 223–243 (VWIALVLGCKGLLLLYGAYLA). Residues 244–257 (GLTNHVSSPPVNQS) are Cytoplasmic-facing. A helical transmembrane segment spans residues 258-278 (LTIMVGVNLLLLTAGLLFVVT). At 279-288 (RYLHSWPNLV) the chain is on the extracellular side. Residues 289–309 (FGLTSGGIFVCTTTVNCCVFI) form a helical membrane-spanning segment. At 310 to 798 (PQLKQWKAFE…FKDDLKPTLV (489 aa)) the chain is on the cytoplasmic side. Residues 353–390 (DEKSCMERLLTEKNAVIESLQEQVSNAKEKLVKLMSAE) are a coiled coil. Disordered stretches follow at residues 441–497 (HVQG…PMAP), 546–666 (SEAP…KQCE), and 693–715 (PAAP…PRLS). The segment covering 479–492 (PKAEQSEGPERGDQ) has biased composition (basic and acidic residues). The segment covering 559–572 (LWKSTTSRSPQKLS) has biased composition (polar residues). A compositionally biased stretch (basic residues) spans 583 to 594 (VRRRRAAQRARS). The span at 606 to 624 (HQANSTVSSSQSGLIVQNR) shows a compositional bias: polar residues. The span at 639–648 (PRSSSVKPSP) shows a compositional bias: low complexity.

This sequence belongs to the G-protein coupled receptor 3 family. GABA-B receptor subfamily. In terms of tissue distribution, expressed in the outer and inner hair cells of the organ of Corti (at protein level). Expressed in the utricle and saccule within the vestibule (at protein level).

The protein resides in the cell membrane. Its subcellular location is the postsynaptic cell membrane. Its function is as follows. Orphan G-protein coupled receptor involved in the regulation of hair cell orientation in mechanosensory organs of the inner ear. It is required to trigger a 180 degree reversal in hair cell orientation, creating a virtual line of polarity reversal (LPR) across which stereociliary bundles are arranged in opposite orientations. The protein is Probable G-protein coupled receptor 156 (Gpr156) of Mus musculus (Mouse).